The primary structure comprises 56 residues: Small ribosomal subunit protein uS14 (56 aa).

A Phosphoserine modification is found at S9. At R12 the chain carries Omega-N-methylarginine. Positions 21, 24, 39, and 42 each coordinate Zn(2+). K48 bears the N6-acetyllysine mark.

This sequence belongs to the universal ribosomal protein uS14 family. In terms of assembly, component of the 40S small ribosomal subunit. Zn(2+) is required as a cofactor.

Its subcellular location is the cytoplasm. It is found in the cytosol. It localises to the rough endoplasmic reticulum. Component of the small ribosomal subunit. The ribosome is a large ribonucleoprotein complex responsible for the synthesis of proteins in the cell. In Mus musculus (Mouse), this protein is Small ribosomal subunit protein uS14 (Rps29).